Here is a 363-residue protein sequence, read N- to C-terminus: MADKVNVCIVGSGNWGSAIAKIVGANAAALPEFEERVTMFVYEELIDGKKLTEIINETHENVKYLKGHKLPPNVVAVPDLVEAAKNADILIFVVPHQFIPNFCKQLLGKIKPNAIAISLIKGFDKAEGGGIDLISHIITRHLKIPCAVLMGANLANEVAEGNFCETTIGCTDKKYGKVLRDLFQANHFRVVVVDDADAVEVCGALKNIVACGAGFVDGLKLGDNTKAAVIRLGLMEMIRFVDVFYPGSKLSTFFESCGVADLITTCYGGRNRRVSEAFVTSGKTIEELEKEMLNGQKLQGPPTAEEVNYMLKNKGLEDKFPLFTAIHKICTNQLKPNDLIDCIRNHPEHMDTSIMPSPKLQNL.

Residues 11-16 (GSGNWG), Phe98, Lys121, and Ala155 contribute to the NAD(+) site. A substrate-binding site is contributed by Lys121. The active-site Proton acceptor is the Lys206. NAD(+)-binding residues include Arg270 and Gln299. Residue 270–271 (RN) participates in substrate binding.

Belongs to the NAD-dependent glycerol-3-phosphate dehydrogenase family. In terms of assembly, homodimer. In terms of tissue distribution, isoform GPDH-1 is predominant in thorax and isoform GPDH-3 in abdomen.

The protein resides in the cytoplasm. It catalyses the reaction sn-glycerol 3-phosphate + NAD(+) = dihydroxyacetone phosphate + NADH + H(+). The protein operates within phospholipid metabolism; alpha-glycerophosphate cycle. The chain is Glycerol-3-phosphate dehydrogenase [NAD(+)], cytoplasmic from Drosophila melanogaster (Fruit fly).